The following is an 814-amino-acid chain: Threonine--tRNA ligase 2, cytoplasmic (814 aa).

Residues 2-72 adopt a coiled-coil conformation; the sequence is AAHIAQRLTV…SLREEQERAR (71 aa). A disordered region spans residues 62-142; sequence RSLREEQERA…GHKQEGPCAP (81 aa). Basic and acidic residues-rich tracts occupy residues 63 to 72, 88 to 102, and 119 to 137; these read SLREEQERAR, EEPKQQNNKAKEKGQ, and GNKKNEKKAGKEVDGHKQE. Residues 172–234 form the TGS domain; the sequence is KPIKITLADG…EQDSNVELLK (63 aa). The short motif at 798 to 804 is the Nuclear localization signal element; sequence KLKTLKK.

This sequence belongs to the class-II aminoacyl-tRNA synthetase family.

Its subcellular location is the cytoplasm. It localises to the nucleus. The enzyme catalyses tRNA(Thr) + L-threonine + ATP = L-threonyl-tRNA(Thr) + AMP + diphosphate + H(+). In terms of biological role, catalyzes the attachment of threonine to tRNA(Thr) in a two-step reaction: threonine is first activated by ATP to form Thr-AMP and then transferred to the acceptor end of tRNA(Thr). Also edits incorrectly charged tRNA(Thr) via its editing domain, at the post-transfer stage. The protein is Threonine--tRNA ligase 2, cytoplasmic (tars3) of Xenopus tropicalis (Western clawed frog).